The sequence spans 61 residues: Putative protein RenD (61 aa).

The protein is Putative protein RenD (renD) of Escherichia coli (strain K12).